Consider the following 230-residue polypeptide: Iron-dependent repressor IdeR (230 aa).

The HTH dtxR-type domain occupies 4–65 (LVDTTEMYLR…VAGDRHLELT (62 aa)).

This sequence belongs to the DtxR/MntR family. Homodimer.

It localises to the cytoplasm. Its function is as follows. Metal-dependent DNA-binding protein that controls transcription of many genes involved in iron metabolism. In Mycobacterium bovis (strain ATCC BAA-935 / AF2122/97), this protein is Iron-dependent repressor IdeR (ideR).